Here is a 92-residue protein sequence, read N- to C-terminus: Small ribosomal subunit protein uS19c (92 aa).

Belongs to the universal ribosomal protein uS19 family.

The protein localises to the plastid. Its subcellular location is the chloroplast. Protein S19 forms a complex with S13 that binds strongly to the 16S ribosomal RNA. This is Small ribosomal subunit protein uS19c from Draba nemorosa (Woodland whitlowgrass).